Reading from the N-terminus, the 464-residue chain is MGKRLLDKLWEKHIVATNENGLDLLYIDLHLVHEVTSPQAFEGLRLANRTVRRPDLTFATMDHNIPTKDVWNITDHIAKQQLDTLRANCKQFHISLADIGDEAQGIVHVIGPELGLTVPGKTIVCGDSHTATHGAFSALAFGIGTSEVEHVLATQTLWQRKPKAMGIELKGTLPKGVYAKDIILHILATYGVAVGTGYVMEFYGETIRSMEMEERMTLCNMAIEGGAKAGIIAPDEKTFAYVKGRKYAPKDFERAVEKWSELYTDSDAVYDMHISIDVSKLAPYVTWGTNPSMGIRIDEQLPAISDQNEERAFAYMGLKPKQSAYDIPIKHVFIGSCTNSRLSDLEIAAAIVKGKKVKDGVRALVVPGSQKVRQLAMEKGLHHIFEEAGFEWREPGCSMCLGMNPDQVPAGEHCASTSNRNFEGRQGKGARTHLVSPAMAAAAALYGHFVDVRKESYDGAISYS.

Positions 337, 397, and 400 each coordinate [4Fe-4S] cluster.

This sequence belongs to the aconitase/IPM isomerase family. LeuC type 1 subfamily. As to quaternary structure, heterodimer of LeuC and LeuD. It depends on [4Fe-4S] cluster as a cofactor.

It carries out the reaction (2R,3S)-3-isopropylmalate = (2S)-2-isopropylmalate. The protein operates within amino-acid biosynthesis; L-leucine biosynthesis; L-leucine from 3-methyl-2-oxobutanoate: step 2/4. Functionally, catalyzes the isomerization between 2-isopropylmalate and 3-isopropylmalate, via the formation of 2-isopropylmaleate. This Bacillus cytotoxicus (strain DSM 22905 / CIP 110041 / 391-98 / NVH 391-98) protein is 3-isopropylmalate dehydratase large subunit.